Consider the following 360-residue polypeptide: Phenylalanine--tRNA ligase alpha subunit (360 aa).

E260 serves as a coordination point for Mg(2+).

Belongs to the class-II aminoacyl-tRNA synthetase family. Phe-tRNA synthetase alpha subunit type 1 subfamily. Tetramer of two alpha and two beta subunits. Mg(2+) serves as cofactor.

It localises to the cytoplasm. The enzyme catalyses tRNA(Phe) + L-phenylalanine + ATP = L-phenylalanyl-tRNA(Phe) + AMP + diphosphate + H(+). This is Phenylalanine--tRNA ligase alpha subunit from Bradyrhizobium diazoefficiens (strain JCM 10833 / BCRC 13528 / IAM 13628 / NBRC 14792 / USDA 110).